We begin with the raw amino-acid sequence, 196 residues long: Large ribosomal subunit protein bL25 (196 aa).

This sequence belongs to the bacterial ribosomal protein bL25 family. CTC subfamily. As to quaternary structure, part of the 50S ribosomal subunit; part of the 5S rRNA/L5/L18/L25 subcomplex. Contacts the 5S rRNA. Binds to the 5S rRNA independently of L5 and L18.

In terms of biological role, this is one of the proteins that binds to the 5S RNA in the ribosome where it forms part of the central protuberance. This Bacteroides fragilis (strain ATCC 25285 / DSM 2151 / CCUG 4856 / JCM 11019 / LMG 10263 / NCTC 9343 / Onslow / VPI 2553 / EN-2) protein is Large ribosomal subunit protein bL25.